The chain runs to 320 residues: Acetyl-coenzyme A carboxylase carboxyl transferase subunit alpha (320 aa).

The CoA carboxyltransferase C-terminal domain maps to 39 to 293; the sequence is ALDAKAAKLL…RGAIAAMLKE (255 aa).

Belongs to the AccA family. As to quaternary structure, acetyl-CoA carboxylase is a heterohexamer composed of biotin carboxyl carrier protein (AccB), biotin carboxylase (AccC) and two subunits each of ACCase subunit alpha (AccA) and ACCase subunit beta (AccD).

The protein localises to the cytoplasm. The catalysed reaction is N(6)-carboxybiotinyl-L-lysyl-[protein] + acetyl-CoA = N(6)-biotinyl-L-lysyl-[protein] + malonyl-CoA. It functions in the pathway lipid metabolism; malonyl-CoA biosynthesis; malonyl-CoA from acetyl-CoA: step 1/1. In terms of biological role, component of the acetyl coenzyme A carboxylase (ACC) complex. First, biotin carboxylase catalyzes the carboxylation of biotin on its carrier protein (BCCP) and then the CO(2) group is transferred by the carboxyltransferase to acetyl-CoA to form malonyl-CoA. This Ruegeria pomeroyi (strain ATCC 700808 / DSM 15171 / DSS-3) (Silicibacter pomeroyi) protein is Acetyl-coenzyme A carboxylase carboxyl transferase subunit alpha.